Reading from the N-terminus, the 509-residue chain is BPI fold-containing family C protein (509 aa).

Residues 1 to 23 (MRTKQVPVLWACFLLWSLYIASS) form the signal peptide. Residues Asn-63, Asn-79, Asn-92, Asn-113, and Asn-117 are each glycosylated (N-linked (GlcNAc...) asparagine). An intrachain disulfide couples Cys-161 to Cys-202. Residues Asn-215, Asn-227, Asn-357, Asn-374, and Asn-457 are each glycosylated (N-linked (GlcNAc...) asparagine).

The protein belongs to the BPI/LBP/Plunc superfamily. BPI/LBP family.

The protein resides in the secreted. The protein is BPI fold-containing family C protein (Bpifc) of Mus musculus (Mouse).